The primary structure comprises 314 residues: Vacuolar membrane protein FOSTERSO_4058 (314 aa).

A disordered region spans residues 32–59 (KPTSSVVSETSSKSLPSLTSSAFSTSSG). Residues 93-113 (VYIAVGAVIGAIFISILIWWL) form a helical membrane-spanning segment. Residues S148, S254, and S274 each carry the phosphoserine modification. Positions 240–309 (EERKLNLNRP…PSMFLDDVLN (70 aa)) are disordered. Residues 254–269 (SPERKEKKINSMEGYH) show a composition bias toward basic and acidic residues.

It belongs to the PRM5 family.

Its subcellular location is the vacuole membrane. The chain is Vacuolar membrane protein FOSTERSO_4058 from Saccharomyces cerevisiae (strain FostersO) (Baker's yeast).